The primary structure comprises 365 residues: Putative chalcone synthase (365 aa).

The active site involves Cys-144.

This sequence belongs to the thiolase-like superfamily. Chalcone/stilbene synthases family.

It catalyses the reaction (E)-4-coumaroyl-CoA + 3 malonyl-CoA + 3 H(+) = 2',4,4',6'-tetrahydroxychalcone + 3 CO2 + 4 CoA. In Bacillus subtilis (strain 168), this protein is Putative chalcone synthase (bcsA).